Here is an 879-residue protein sequence, read N- to C-terminus: Exocyst complex component 1 (879 aa).

Residues 29–94 (SQYSESEYDP…ATSLGNNDGD (66 aa)) form a disordered region. Residues 40–52 (ETTHSESDSENHH) show a composition bias toward basic and acidic residues. Residues 64–76 (FLSQSNDNVSNGP) are compositionally biased toward polar residues. The span at 77–91 (SNNTLSSSATSLGNN) shows a compositional bias: low complexity. Coiled coils occupy residues 165–187 (YNKQ…NKME) and 226–248 (KGLK…KLKS). Disordered stretches follow at residues 371 to 413 (QNDF…GKDG) and 455 to 557 (GQRN…PDAP). A compositionally biased stretch (low complexity) spans 373 to 409 (DFFSSSSSSKKSIDSLNNNTSTSTPSKNSSSSSSSSS). Basic residues predominate over residues 480 to 500 (KKSSKKDKKDKKDKKDKKDKK). Positions 519 to 532 (DSNSPKSPNNAVNG) are enriched in polar residues. A compositionally biased stretch (pro residues) spans 541–551 (SPPPPPPPPPK).

The protein belongs to the SEC3 family. As to quaternary structure, the exocyst complex is composed of sec3/exoc1, sec5/exoc2, sec6/exoc3, sec8/exoc4, sec10/exoc5, sec15/exoc6, exo70/exoc7 and exo84/exoc8.

The protein resides in the midbody. The protein localises to the midbody ring. Functionally, component of the exocyst complex involved in the docking of exocytic vesicles with fusion sites on the plasma membrane. This chain is Exocyst complex component 1 (exoc1), found in Dictyostelium discoideum (Social amoeba).